The following is a 496-amino-acid chain: UDP-glycosyltransferase 73C3 (496 aa).

Residues Ser-297, 357-359 (APQ), 374-382 (HCGWNSTLE), and 396-399 (FGDQ) each bind UDP-alpha-D-glucose.

Belongs to the UDP-glycosyltransferase family.

The chain is UDP-glycosyltransferase 73C3 (UGT73C3) from Arabidopsis thaliana (Mouse-ear cress).